The chain runs to 451 residues: Tubulin alpha-1B chain (451 aa).

The MREC motif motif lies at 1 to 4 (MREC). Gly10, Gln11, Ala12, and Gln15 together coordinate GTP. Residue Lys40 is modified to N6,N6,N6-trimethyllysine; alternate. Lys40 carries the post-translational modification N6-acetyllysine; alternate. The residue at position 48 (Ser48) is a Phosphoserine. Residues Glu71, Ala99, Ser140, Gly143, Gly144, Thr145, Gly146, Thr179, Glu183, Asn206, Tyr224, and Asn228 each coordinate GTP. Glu71 lines the Mg(2+) pocket. Ser232 bears the Phosphoserine mark. Leu252 serves as a coordination point for GTP. Glu254 is a catalytic residue. 3'-nitrotyrosine is present on Tyr282. Lys326 participates in a covalent cross-link: Glycyl lysine isopeptide (Lys-Gly) (interchain with G-Cter in ubiquitin). Position 339 is an omega-N-methylarginine (Arg339). Lys370 is covalently cross-linked (Glycyl lysine isopeptide (Lys-Gly) (interchain with G-Cter in ubiquitin)). Residues 432–451 (YEEVGVDSVEGEGEEEGEEY) form a disordered region. Ser439 bears the Phosphoserine mark. 5-glutamyl polyglutamate is present on residues Glu443 and Glu445. Tyr451 is modified (3'-nitrotyrosine).

It belongs to the tubulin family. As to quaternary structure, heterodimer of alpha- and beta-tubulin. A typical microtubule is a hollow water-filled tube with an outer diameter of 25 nm and an inner diameter of 15 nM. Alpha-beta heterodimers associate head-to-tail to form protofilaments running lengthwise along the microtubule wall with the beta-tubulin subunit facing the microtubule plus end conferring a structural polarity. Microtubules usually have 13 protofilaments but different protofilament numbers can be found in some organisms and specialized cells. Interacts with gamma-tubulin; the interaction allows microtubules to nucleate from the gamma-tubulin ring complex (gTuRC). Nascent microtubule interacts (via alpha-tubulin MREC motif) with TTC5/STRAP; this interaction may result in tubulin mRNA-targeted degradation. Component of sperm flagellar doublet microtubules. It depends on Mg(2+) as a cofactor. Some glutamate residues at the C-terminus are polyglutamylated, resulting in polyglutamate chains on the gamma-carboxyl group. Polyglutamylation plays a key role in microtubule severing by spastin (SPAST). SPAST preferentially recognizes and acts on microtubules decorated with short polyglutamate tails: severing activity by SPAST increases as the number of glutamates per tubulin rises from one to eight, but decreases beyond this glutamylation threshold. Glutamylation is also involved in cilia motility. In terms of processing, some glutamate residues at the C-terminus are monoglycylated but not polyglycylated due to the absence of functional TTLL10 in human. Monoglycylation is mainly limited to tubulin incorporated into cilia and flagella axonemes, which is required for their stability and maintenance. Flagella glycylation controls sperm motility. Both polyglutamylation and monoglycylation can coexist on the same protein on adjacent residues, and lowering glycylation levels increases polyglutamylation, and reciprocally. Post-translationally, acetylation of alpha chains at Lys-40 is located inside the microtubule lumen. This modification has been correlated with increased microtubule stability, intracellular transport and ciliary assembly. Methylation of alpha chains at Lys-40 is found in mitotic microtubules and is required for normal mitosis and cytokinesis contributing to genomic stability. In terms of processing, nitration of Tyr-451 is irreversible and interferes with normal dynein intracellular distribution. Post-translationally, undergoes a tyrosination/detyrosination cycle, the cyclic removal and re-addition of a C-terminal tyrosine residue by the enzymes tubulin tyrosine carboxypeptidase (MATCAP1/KIAA0895L, VASH1 or VASH2) and tubulin tyrosine ligase (TTL), respectively. Tyrosination promotes microtubule interaction with CAP-Gly domain-containing proteins such as CLIP1, CLIP2 and DCTN1. Tyrosination regulates the initiation of dynein-dynactin motility via interaction with DCTN1, which brings the dynein-dynactin complex into contact with microtubules. In neurons, tyrosinated tubulins mediate the initiation of retrograde vesicle transport. In terms of processing, detyrosination is involved in metaphase plate congression by guiding chromosomes during mitosis: detyrosination promotes interaction with CENPE, promoting pole-proximal transport of chromosomes toward the equator. Detyrosination increases microtubules-dependent mechanotransduction in dystrophic cardiac and skeletal muscle. In cardiomyocytes, detyrosinated microtubules are required to resist to contractile compression during contraction: detyrosination promotes association with desmin (DES) at force-generating sarcomeres, leading to buckled microtubules and mechanical resistance to contraction.

The protein localises to the cytoplasm. It is found in the cytoskeleton. The enzyme catalyses GTP + H2O = GDP + phosphate + H(+). In terms of biological role, tubulin is the major constituent of microtubules, protein filaments consisting of alpha- and beta-tubulin heterodimers. Microtubules grow by the addition of GTP-tubulin dimers to the microtubule end, where a stabilizing cap forms. Below the cap, tubulin dimers are in GDP-bound state, owing to GTPase activity of alpha-tubulin. In Homo sapiens (Human), this protein is Tubulin alpha-1B chain (TUBA1B).